The chain runs to 593 residues: Tyrosine-protein phosphatase non-receptor type 11 (593 aa).

Thr2 carries the N-acetylthreonine modification. SH2 domains are found at residues 6-102 (WFHP…KYPL) and 112-216 (WFHG…KQPL). Tyr62 and Tyr66 each carry phosphotyrosine. A Tyrosine-protein phosphatase domain is found at 247 to 521 (FWEEFETLQQ…RFIYMAVQHY (275 aa)). Substrate-binding positions include Asp425, 459-465 (CSAGIGR), and Gln506. The Phosphocysteine intermediate role is filled by Cys459. Tyr542 and Tyr580 each carry phosphotyrosine; by PDGFR.

The protein belongs to the protein-tyrosine phosphatase family. Non-receptor class 2 subfamily. In terms of assembly, interacts with CD84 and with phosphorylated SIT1 and MZPL1. Interacts with FCRL4, FCRL6 and ANKHD1. Interacts with GAREM1 (tyrosine phosphorylated); the interaction increases MAPK/ERK activity and does not affect the GRB2/SOS complex formation. Interacts with PTPNS1 and BCAR3. Interacts with phosphorylated LIME1. Interacts with SHB and INPP5D/SHIP1. Interacts with KIR2DL1; the interaction is enhanced by ARRB2. Interacts with GAB2. Interacts with TERT; the interaction retains TERT in the nucleus. Interacts with PECAM1 and FER. Interacts with EPHA2 (activated); participates in PTK2/FAK1 dephosphorylation in EPHA2 downstream signaling. Interacts with MILR1 (tyrosine phosphorylated). Interacts with FLT1 (tyrosine-phosphorylated), FLT3 (tyrosine-phosphorylated), FLT4 (tyrosine-phosphorylated), KIT and GRB2. Interacts with ROS1; mediates PTPN11 phosphorylation. Interacts with PDGFRA (tyrosine phosphorylated). Interacts with PDGFRB (tyrosine phosphorylated); this interaction increases the PTPN11 phosphatase activity. Interacts (via SH2 domain) with TEK/TIE2 (tyrosine phosphorylated). Interacts with CEACAM1 (via cytoplasmic domain); this interaction depends on the monomer/dimer equilibrium and is phosphorylation-dependent. Interacts with MPIG6B (via ITIM motif). Interacts with SIGLEC10. Interacts with Lilrb4a (when tyrosine phosphorylated). Interacts with SIGLEC10. Interacts with CLEC12B (via ITIM motif); this interaction triggers dephosphorylation and activation of PTPN11. Interacts (via SH2 domains) with NEDD9/CAS-L; the interaction is enhanced when NEDD9/CAS-L is tyrosine phosphorylated. Interacts with PIRB; when PIRB is phosphorylated by LYN at 'Tyr-794' and 'Tyr-824'. In terms of processing, phosphorylated on Tyr-542 and Tyr-580 upon receptor protein tyrosine kinase activation; which creates a binding site for GRB2 and other SH2-containing proteins. Phosphorylated upon activation of the receptor-type kinase FLT3. Phosphorylated by activated PDGFRB. Phosphorylated upon activation of the receptor-type kinase PDGFRA. In terms of tissue distribution, highly expressed in brain, heart and kidney.

The protein resides in the cytoplasm. It carries out the reaction O-phospho-L-tyrosyl-[protein] + H2O = L-tyrosyl-[protein] + phosphate. Acts downstream of various receptor and cytoplasmic protein tyrosine kinases to participate in the signal transduction from the cell surface to the nucleus. Positively regulates MAPK signal transduction pathway. Dephosphorylates GAB1, ARHGAP35 and EGFR. Dephosphorylates ROCK2 at 'Tyr-722' resulting in stimulation of its RhoA binding activity. Dephosphorylates CDC73. Dephosphorylates SOX9 on tyrosine residues, leading to inactivate SOX9 and promote ossification. Dephosphorylates tyrosine-phosphorylated NEDD9/CAS-L. The protein is Tyrosine-protein phosphatase non-receptor type 11 (Ptpn11) of Mus musculus (Mouse).